Consider the following 336-residue polypeptide: Palmitoyltransferase PFA3 (336 aa).

The Cytoplasmic portion of the chain corresponds to 1 to 6 (MNDRLS). Residues 7 to 29 (LTSLFPRCLTTCLYIWTAYITLT) traverse the membrane as a helical segment. The Vacuolar segment spans residues 30–37 (RIHQIPRW). The chain crosses the membrane as a helical span at residues 38 to 58 (FLALTIVPTLAVALYTYYKVI). Over 59 to 147 (ARGPGSPLDF…AECTGFRNQK (89 aa)) the chain is Cytoplasmic. The region spanning 104–154 (RVCQVCHVWKPDRCHHCSSCDVCILKMDHHCPWFAECTGFRNQKFFIQFLM) is the DHHC domain. The chain crosses the membrane as a helical span at residues 148-168 (FFIQFLMYTTLYAFLVLIYTC). Residues 169–188 (YELGTWFNSGSFNRELIDFH) are Vacuolar-facing. The chain crosses the membrane as a helical span at residues 189 to 209 (LLGVALLAVAVFISVLAFTCF). The Cytoplasmic segment spans residues 210 to 336 (SIYQVCKNQT…RASVEIIDAN (127 aa)).

Belongs to the DHHC palmitoyltransferase family. PFA3 subfamily. Autopalmitoylated.

It is found in the vacuole membrane. It catalyses the reaction L-cysteinyl-[protein] + hexadecanoyl-CoA = S-hexadecanoyl-L-cysteinyl-[protein] + CoA. In terms of biological role, palmitoyltransferase specific for VAC8. Palmitoylates VAC8 at one or more of its N-terminal cysteine residues, which is required for its proper membrane localization. The chain is Palmitoyltransferase PFA3 (PFA3) from Saccharomyces cerevisiae (strain ATCC 204508 / S288c) (Baker's yeast).